The following is a 389-amino-acid chain: Galactose-1-phosphate uridylyltransferase (389 aa).

This sequence belongs to the galactose-1-phosphate uridylyltransferase type 2 family.

Its subcellular location is the cytoplasm. It catalyses the reaction alpha-D-galactose 1-phosphate + UDP-alpha-D-glucose = alpha-D-glucose 1-phosphate + UDP-alpha-D-galactose. Its pathway is carbohydrate metabolism; galactose metabolism. This chain is Galactose-1-phosphate uridylyltransferase (galT), found in Butyrivibrio fibrisolvens.